The chain runs to 78 residues: Large ribosomal subunit protein bL28 (78 aa).

It belongs to the bacterial ribosomal protein bL28 family.

The sequence is that of Large ribosomal subunit protein bL28 from Marinobacter nauticus (strain ATCC 700491 / DSM 11845 / VT8) (Marinobacter aquaeolei).